We begin with the raw amino-acid sequence, 181 residues long: ADP-ribosylation factor 1 (181 aa).

G2 carries N-myristoyl glycine lipidation. Residues 24–31 (GLDAAGKT), 67–71 (DVGGQ), and 126–129 (NKQD) contribute to the GTP site.

This sequence belongs to the small GTPase superfamily. Arf family. As to quaternary structure, interacts with AGD7 and GDAP1. GDP-locked form interacts with cytosolic tail of p24 proteins. Interacts with AGD5 at trans-Golgi network. Interacts with A.tumefaciens AK6b.

It is found in the golgi apparatus. The protein resides in the endosome. Its subcellular location is the trans-Golgi network. It localises to the early endosome. It catalyses the reaction GTP + H2O = GDP + phosphate + H(+). With respect to regulation, activated by AGD7 and AGD10. GTP-binding protein involved in protein trafficking; required for the sequence-specific vacuolar sorting route to the lytic vacuole, for the ER-to-Golgi transport and for the Golgi-derived transport to the plasma membrane. Involved in the recruitment of COPI and GDAP1 to membranes. Required for recycling of PIN auxin transporters (e.g. PIN1 and PIN2) in a fungal toxin brefeldin A (BFA)-dependent manner. Involved in various auxin-dependent developmental processes. In Arabidopsis thaliana (Mouse-ear cress), this protein is ADP-ribosylation factor 1.